The chain runs to 102 residues: Thioredoxin (102 aa).

Residues 1-102 (MVKVVSAENF…SLIRLINQHS (102 aa)) form the Thioredoxin domain. An intrachain disulfide couples cysteine 28 to cysteine 31.

The protein belongs to the thioredoxin family.

Its function is as follows. Participates in various redox reactions through the reversible oxidation of its active center dithiol to a disulfide and catalyzes dithiol-disulfide exchange reactions. The sequence is that of Thioredoxin (trxA) from Chlamydia caviae (strain ATCC VR-813 / DSM 19441 / 03DC25 / GPIC) (Chlamydophila caviae).